Consider the following 160-residue polypeptide: ATP synthase subunit b (160 aa).

Residues 13–33 form a helical membrane-spanning segment; sequence VNLAIVIGVLVWFLRGFLGGI.

It belongs to the ATPase B chain family. As to quaternary structure, F-type ATPases have 2 components, F(1) - the catalytic core - and F(0) - the membrane proton channel. F(1) has five subunits: alpha(3), beta(3), gamma(1), delta(1), epsilon(1). F(0) has four main subunits: a(1), b(1), b'(1) and c(10-14). The alpha and beta chains form an alternating ring which encloses part of the gamma chain. F(1) is attached to F(0) by a central stalk formed by the gamma and epsilon chains, while a peripheral stalk is formed by the delta, b and b' chains.

The protein localises to the cellular thylakoid membrane. In terms of biological role, f(1)F(0) ATP synthase produces ATP from ADP in the presence of a proton or sodium gradient. F-type ATPases consist of two structural domains, F(1) containing the extramembraneous catalytic core and F(0) containing the membrane proton channel, linked together by a central stalk and a peripheral stalk. During catalysis, ATP synthesis in the catalytic domain of F(1) is coupled via a rotary mechanism of the central stalk subunits to proton translocation. Functionally, component of the F(0) channel, it forms part of the peripheral stalk, linking F(1) to F(0). The polypeptide is ATP synthase subunit b (Parasynechococcus marenigrum (strain WH8102)).